Consider the following 146-residue polypeptide: Cytochrome c' (146 aa).

The first 21 residues, 1–21 (MKLRIATIAGLVVLGSGFAVA), serve as a signal peptide directing secretion. Arg-29, Thr-86, Ala-87, Cys-134, Cys-137, and His-138 together coordinate heme c.

In terms of assembly, monomer. Post-translationally, binds 1 heme c group covalently per subunit.

In terms of biological role, cytochrome c' is the most widely occurring bacterial c-type cytochrome. Cytochromes c' are high-spin proteins and the heme has no sixth ligand. Their exact function is not known. The protein is Cytochrome c' (cycA) of Rhodopseudomonas palustris (strain ATCC BAA-98 / CGA009).